We begin with the raw amino-acid sequence, 359 residues long: Acyl-CoA desaturase 3 (359 aa).

The interval 1–34 (MPGHLLQEEMTPSYTTTTTITAPPSGSLQNGREK) is disordered. Topologically, residues 1-72 (MPGHLLQEEM…EGPPPKLEYV (72 aa)) are cytoplasmic. Low complexity predominate over residues 11-27 (TPSYTTTTTITAPPSGS). A helical membrane pass occupies residues 73-93 (WRNIILMALLHVGALYGITLV). Asparagine 75 is a binding site for substrate. Residues 94–97 (PSCK) are Lumenal-facing. A helical transmembrane segment spans residues 98–118 (LYTCLFAFVYYVISIEGIGAG). Residues 119 to 217 (VHRLWSHRTY…EKLVMFQRRY (99 aa)) lie on the Cytoplasmic side of the membrane. 2 residues coordinate Fe cation: histidine 120 and histidine 125. Positions 120–125 (HRLWSH) match the Histidine box-1 motif. Residues asparagine 148, arginine 155, and aspartate 156 each coordinate substrate. 3 residues coordinate Fe cation: histidine 157, histidine 160, and histidine 161. The Histidine box-2 signature appears at 157-161 (HRAHH). Substrate-binding residues include arginine 188 and lysine 189. A Phosphoserine modification is found at serine 203. The helical transmembrane segment at 218–237 (YKPGILLMCFILPTLVPWYC) threads the bilayer. Over 238–241 (WGET) the chain is Lumenal. The chain crosses the membrane as a helical span at residues 242–263 (FLNSFYVATLLRYAVVLNATWL). Tryptophan 262 lines the substrate pocket. Residues 264–359 (VNSAAHLYGY…RTGDGSHKSG (96 aa)) lie on the Cytoplasmic side of the membrane. Fe cation is bound by residues histidine 269, histidine 298, histidine 301, and histidine 302. Positions 298–302 (HNYHH) match the Histidine box-3 motif.

It belongs to the fatty acid desaturase type 1 family. Requires Fe(2+) as cofactor. As to expression, detected in skin, but at lower levels compared to Scd1. Detected in the middlle part of the sebaceous gland, but not in hair follicle. Not detected in liver and brain.

The protein resides in the endoplasmic reticulum membrane. Its subcellular location is the microsome membrane. The enzyme catalyses hexadecanoyl-CoA + 2 Fe(II)-[cytochrome b5] + O2 + 2 H(+) = (9Z)-hexadecenoyl-CoA + 2 Fe(III)-[cytochrome b5] + 2 H2O. Its function is as follows. Stearoyl-CoA desaturase that utilizes O(2) and electrons from reduced cytochrome b5 to introduce the first double bond into saturated fatty acyl-CoA substrates. Catalyzes the insertion of a cis double bond at the delta-9 position into fatty acyl-CoA substrates including palmitoyl-CoA. Has a strong preference for saturated fatty acids with chain lengths of 14 or 16 carbon atoms (C14:0 and C16:0), and has only very low activity with stearatate (C18:0). Required for the biosynthesis of membrane phospholipids, cholesterol esters and triglycerides. The protein is Acyl-CoA desaturase 3 of Mus musculus (Mouse).